Consider the following 442-residue polypeptide: CBL-interacting serine/threonine-protein kinase 14 (442 aa).

A Protein kinase domain is found at 22–276 (YEVGKLVGCG…IEEIIHDPWF (255 aa)). ATP contacts are provided by residues 28–36 (VGCGAFAKV) and lysine 51. Residue aspartate 144 is the Proton acceptor of the active site. The interval 162–191 (DFGLSALTDQIRPDGLLHTLCGTPAYVAPE) is activation loop. Phosphoserine is present on serine 166. Threonine 180 carries the phosphothreonine modification. The 25-residue stretch at 305–329 (MGARRMNAFDIISGSPGFNLSGLFG) folds into the NAF domain. The tract at residues 335–365 (DRVERFVSAWTAERVVERLEEIVSAENLTVA) is PPI.

Belongs to the protein kinase superfamily. CAMK Ser/Thr protein kinase family. SNF1 subfamily. Interacts with CBL2. Interacts with CBL3. Interacts with CBL8. Interacts with CBL9. Interacts with KIN10 and KIN11. Requires Mn(2+) as cofactor. In terms of tissue distribution, predominant in roots, cauline leaves, and flowers. Ubiquitous with highest expression in 7-day-old seedlings and flower buds, followed by that in cauline leaves and young siliques.

It is found in the cytoplasm. It localises to the nucleus. It carries out the reaction L-seryl-[protein] + ATP = O-phospho-L-seryl-[protein] + ADP + H(+). The catalysed reaction is L-threonyl-[protein] + ATP = O-phospho-L-threonyl-[protein] + ADP + H(+). In terms of biological role, CIPK serine-threonine protein kinases interact with CBL proteins. Binding of a CBL protein to the regulatory NAF domain of CIPK protein lead to the activation of the kinase in a calcium-dependent manner. In Arabidopsis thaliana (Mouse-ear cress), this protein is CBL-interacting serine/threonine-protein kinase 14 (CIPK14).